Consider the following 215-residue polypeptide: Riboflavin synthase (215 aa).

2 Lumazine-binding repeats span residues 1–96 (MFTG…FGGH) and 97–193 (IVSG…EQFL). 2,4-dihydroxypteridine contacts are provided by residues 4–6 (GII), 47–49 (CLT), 61–66 (DVMSET), 100–102 (GHI), Lys-135, 144–146 (SLT), and 158–163 (SIIPHT).

Homotrimer.

The catalysed reaction is 2 6,7-dimethyl-8-(1-D-ribityl)lumazine + H(+) = 5-amino-6-(D-ribitylamino)uracil + riboflavin. Its pathway is cofactor biosynthesis; riboflavin biosynthesis; riboflavin from 2-hydroxy-3-oxobutyl phosphate and 5-amino-6-(D-ribitylamino)uracil: step 2/2. Catalyzes the dismutation of two molecules of 6,7-dimethyl-8-ribityllumazine, resulting in the formation of riboflavin and 5-amino-6-(D-ribitylamino)uracil. The chain is Riboflavin synthase (ribE) from Actinobacillus pleuropneumoniae (Haemophilus pleuropneumoniae).